The following is a 1588-amino-acid chain: Multicopy suppressor of chk1 protein 1 (1588 aa).

Residues 38 to 60 (HAKPSTQQQQQQQNISNETTSTG) are disordered. Positions 51-60 (NISNETTSTG) are enriched in polar residues. Positions 82-124 (NVRVTPKKEEFSRGLDFISDLYDQTARKSGAVRVIPPDNWKCP) constitute a JmjN domain. The PHD-type 1 zinc finger occupies 298-345 (KCKLCAQEGSSLVTCCICQSNYHYACVEAPFAPFSDIHYWTCNSCIPS). Over residues 385-395 (PLTLPSNTKTP) the composition is skewed to polar residues. The interval 385–412 (PLTLPSNTKTPPASARQSSRRTRSTSGK) is disordered. The 171-residue stretch at 475–645 (FPTSRQNAYY…DMHAENSFNM (171 aa)) folds into the JmjC domain. The tract at residues 848 to 872 (EKRKPKRGSATHSHLESPSEEVEDL) is disordered. Residues 1171-1220 (FHYCFCRQPEAGMMIECELCHEWYHAKCMKMSKKKLRADEKFICPICDYR) form a PHD-type 2 zinc finger. Positions 1319 to 1341 (APQPPPFIGESRSNRKPRPTKRQ) are disordered. The PHD-type 3 zinc-finger motif lies at 1454–1505 (SVICLCRQPFAISDGTVQCHNCLEWFHYECVGLSSDIVSTLSNYACPDCCSK).

It localises to the nucleus. Its function is as follows. Has a role in regulating chromatin structure via global deacetylation of histone H3. This function is associated with the activity of a histone deacetylase. The polypeptide is Multicopy suppressor of chk1 protein 1 (msc1) (Schizosaccharomyces pombe (strain 972 / ATCC 24843) (Fission yeast)).